A 402-amino-acid polypeptide reads, in one-letter code: uncharacterized protein (402 aa).

Helical transmembrane passes span 13-33 (IGVL…VNLA), 68-88 (FFIQ…GMVV), 108-128 (LMAL…GDIL), 149-169 (LLIW…LTSF), 223-243 (LNYF…AAAA), 261-281 (LWMA…VTDK), 283-303 (ICLL…VVYL), 327-347 (YLMQ…GLYG), and 353-373 (AGVL…HLWL).

The protein resides in the cell membrane. Involved in transport. This is an uncharacterized protein from Bacillus subtilis (strain 168).